We begin with the raw amino-acid sequence, 331 residues long: Ketol-acid reductoisomerase (NADP(+)) (331 aa).

A KARI N-terminal Rossmann domain is found at 2–182 (AKMYYDQDAD…GGTKAGAIET (181 aa)). NADP(+) contacts are provided by residues 25–28 (FGSQ), S51, S53, and 83–86 (DEKQ). H108 is a catalytic residue. NADP(+) is bound at residue G134. In terms of domain architecture, KARI C-terminal knotted spans 183 to 328 (TFKEETETDL…KSLREMMPWL (146 aa)). Residues D191, E195, E227, and E231 each contribute to the Mg(2+) site. Residue S252 coordinates substrate.

The protein belongs to the ketol-acid reductoisomerase family. The cofactor is Mg(2+).

It carries out the reaction (2R)-2,3-dihydroxy-3-methylbutanoate + NADP(+) = (2S)-2-acetolactate + NADPH + H(+). It catalyses the reaction (2R,3R)-2,3-dihydroxy-3-methylpentanoate + NADP(+) = (S)-2-ethyl-2-hydroxy-3-oxobutanoate + NADPH + H(+). It participates in amino-acid biosynthesis; L-isoleucine biosynthesis; L-isoleucine from 2-oxobutanoate: step 2/4. It functions in the pathway amino-acid biosynthesis; L-valine biosynthesis; L-valine from pyruvate: step 2/4. Involved in the biosynthesis of branched-chain amino acids (BCAA). Catalyzes an alkyl-migration followed by a ketol-acid reduction of (S)-2-acetolactate (S2AL) to yield (R)-2,3-dihydroxy-isovalerate. In the isomerase reaction, S2AL is rearranged via a Mg-dependent methyl migration to produce 3-hydroxy-3-methyl-2-ketobutyrate (HMKB). In the reductase reaction, this 2-ketoacid undergoes a metal-dependent reduction by NADPH to yield (R)-2,3-dihydroxy-isovalerate. This is Ketol-acid reductoisomerase (NADP(+)) from Caldanaerobacter subterraneus subsp. tengcongensis (strain DSM 15242 / JCM 11007 / NBRC 100824 / MB4) (Thermoanaerobacter tengcongensis).